Consider the following 277-residue polypeptide: MAIKKYKPTTNGRRHMTSSDFAEITTSTPEKSLLRPLKKKAGRNNQGKLTVRHHGGGHKRQYRVIDFKRNKDGIPGRVATIEYDPNRSANIALINYADGEKRYIIAAKGLEVGQTIYSGAEADIKIGNALELKDIPVGTVVHNIEMKPGKGGQLVRSAGTSAQVLGKEGKYVLIRLNSGEVRMILATCRATIGQVGNEQHELINIGKAGRSRWMGKRPTVRGSVMNPNDHPHGGGEGKAPIGRKSPMSPWGKPTLGYKTRKKNNNSDKFIVRRRKKK.

2 disordered regions span residues I24–G55 and R221–K277.

Belongs to the universal ribosomal protein uL2 family. In terms of assembly, part of the 50S ribosomal subunit. Forms a bridge to the 30S subunit in the 70S ribosome.

Its function is as follows. One of the primary rRNA binding proteins. Required for association of the 30S and 50S subunits to form the 70S ribosome, for tRNA binding and peptide bond formation. It has been suggested to have peptidyltransferase activity; this is somewhat controversial. Makes several contacts with the 16S rRNA in the 70S ribosome. The protein is Large ribosomal subunit protein uL2 of Listeria welshimeri serovar 6b (strain ATCC 35897 / DSM 20650 / CCUG 15529 / CIP 8149 / NCTC 11857 / SLCC 5334 / V8).